The primary structure comprises 541 residues: Arginine--tRNA ligase (541 aa).

Residues 119 to 129 carry the 'HIGH' region motif; the sequence is ANPTGPLHIGH.

Belongs to the class-I aminoacyl-tRNA synthetase family. In terms of assembly, monomer.

It localises to the cytoplasm. The enzyme catalyses tRNA(Arg) + L-arginine + ATP = L-arginyl-tRNA(Arg) + AMP + diphosphate. The polypeptide is Arginine--tRNA ligase (Helicobacter pylori (strain G27)).